We begin with the raw amino-acid sequence, 84 residues long: UPF0386 protein R01313 (84 aa).

This sequence belongs to the UPF0386 family.

This is UPF0386 protein R01313 from Rhizobium meliloti (strain 1021) (Ensifer meliloti).